Here is a 1756-residue protein sequence, read N- to C-terminus: Multifunctional conjugation protein TraI (1756 aa).

The interval M1–R330 is DNA relaxase. Y16 (O-(5'-phospho-DNA)-tyrosine intermediate; for relaxase activity) is an active-site residue. Y17 acts as the Relaxase in catalysis. Residues H146, H157, and H159 each coordinate Mg(2+). A DNA helicase I region spans residues G950 to V1500. ATP is bound at residue G992 to T999. Residues E1719–L1753 adopt a coiled-coil conformation.

It to TraI of plasmid F. Monomer. Part of the relaxosome, a complex composed of plasmid-encodes TraI, TraM, TraY and host-encoded IHF bound to the F plasmid origin of transfer (oriT). Directly contacts coupling protein TraD. Seems to directly contact TraM via its C-terminus. Mg(2+) serves as cofactor.

It is found in the cytoplasm. It catalyses the reaction ATP-independent breakage of single-stranded DNA, followed by passage and rejoining.. It carries out the reaction ATP + H2O = ADP + phosphate + H(+). Its function is as follows. Conjugative DNA transfer (CDT) is the unidirectional transfer of ssDNA plasmid from a donor to a recipient cell. It is the central mechanism by which antibiotic resistance and virulence factors are propagated in bacterial populations. Part of the relaxosome, which facilitates a site- and strand-specific cut in the origin of transfer by TraI, at the nic site. Relaxosome formation requires binding of IHF and TraY to the oriT region, which then facilitates binding of TraI relaxase. TraI forms a covalent 5'-phosphotyrosine intermediate linkage to the ssDNA. The transesterified T-strand moves from the donor cell to the recipient cell in a 5'to 3' direction, with the DNA helicase activity of TraI unwinding the DNA. DNA transfer occurs via the conjugative pore (transferosome) an intercellular junction mediated by a type IV secretion system, with TraD providing the means to link the relaxosome to the conjugative pore. The relaxase completes DNA transfer by reversing the covalent phosphotyrosine linkage and releasing the T-strand. TraI has also been identified as DNA helicase I. DNA. helicase I is a potent, highly processive DNA-dependent ATPase, able to unwind about 1.1 kb dsDNA per second in a 5' to 3' manner. The polypeptide is Multifunctional conjugation protein TraI (traI) (Escherichia coli).